An 822-amino-acid polypeptide reads, in one-letter code: Microcephalin (822 aa).

Residues Ala-10–Ala-99 enclose the BRCT 1 domain. Disordered stretches follow at residues Met-182–Asn-203, Pro-219–Arg-243, and Ser-266–Asn-295. 2 stretches are compositionally biased toward polar residues: residues Leu-189–Asn-203 and Pro-219–Gly-235. Phosphoserine is present on residues Ser-273, Ser-290, and Ser-327. At Thr-329 the chain carries Phosphothreonine. Disordered regions lie at residues Glu-335–Arg-366, Asn-498–Asp-567, and Thr-594–Thr-636. A compositionally biased stretch (polar residues) spans His-522–Thr-541. 2 stretches are compositionally biased toward basic and acidic residues: residues Glu-542 to Pro-553 and Lys-625 to Thr-634. BRCT domains lie at Ser-627 to Leu-717 and Tyr-738 to Leu-820.

As to quaternary structure, interacts with CDC27 and maybe other components of the APC/C complex. Interacts with histone variant H2AX under DNA damage conditions. As to expression, high levels of expression are found in the developing forebrain and, in particular, in the walls of the lateral ventricles.

It localises to the cytoplasm. The protein localises to the cytoskeleton. The protein resides in the microtubule organizing center. Its subcellular location is the centrosome. Its function is as follows. Implicated in chromosome condensation and DNA damage induced cellular responses. May play a role in neurogenesis and regulation of the size of the cerebral cortex. The chain is Microcephalin from Mus musculus (Mouse).